The primary structure comprises 479 residues: Proline--tRNA ligase (479 aa).

This sequence belongs to the class-II aminoacyl-tRNA synthetase family. ProS type 3 subfamily. As to quaternary structure, homodimer.

The protein resides in the cytoplasm. The enzyme catalyses tRNA(Pro) + L-proline + ATP = L-prolyl-tRNA(Pro) + AMP + diphosphate. Its function is as follows. Catalyzes the attachment of proline to tRNA(Pro) in a two-step reaction: proline is first activated by ATP to form Pro-AMP and then transferred to the acceptor end of tRNA(Pro). The protein is Proline--tRNA ligase of Mesomycoplasma hyopneumoniae (strain 7448) (Mycoplasma hyopneumoniae).